A 352-amino-acid chain; its full sequence is 7,8-didemethyl-8-hydroxy-5-deazariboflavin synthase (352 aa).

The region spanning 35-275 (ITFSKNAFIP…EDISIQVPPN (241 aa)) is the Radical SAM core domain. 3 residues coordinate [4Fe-4S] cluster: cysteine 49, cysteine 53, and cysteine 56.

The protein belongs to the radical SAM superfamily. CofG family. Consists of two subunits, CofG and CofH. It depends on [4Fe-4S] cluster as a cofactor.

The catalysed reaction is 5-amino-5-(4-hydroxybenzyl)-6-(D-ribitylimino)-5,6-dihydrouracil + S-adenosyl-L-methionine = 7,8-didemethyl-8-hydroxy-5-deazariboflavin + 5'-deoxyadenosine + L-methionine + NH4(+) + H(+). It participates in cofactor biosynthesis; coenzyme F0 biosynthesis. Its function is as follows. Catalyzes the radical-mediated synthesis of 7,8-didemethyl-8-hydroxy-5-deazariboflavin from 5-amino-5-(4-hydroxybenzyl)-6-(D-ribitylimino)-5,6-dihydrouracil. In Methanococcus maripaludis (strain C6 / ATCC BAA-1332), this protein is 7,8-didemethyl-8-hydroxy-5-deazariboflavin synthase.